A 247-amino-acid polypeptide reads, in one-letter code: Adenosylcobinamide-GDP ribazoletransferase (247 aa).

A run of 5 helical transmembrane segments spans residues 1–21 (MLRL…PFSF), 37–57 (LVGL…ALAL), 61–81 (VADL…HLDG), 109–129 (AVGV…LFAV), and 176–196 (VAVA…LPGI).

Belongs to the CobS family. The cofactor is Mg(2+).

The protein resides in the cell inner membrane. The catalysed reaction is alpha-ribazole + adenosylcob(III)inamide-GDP = adenosylcob(III)alamin + GMP + H(+). It catalyses the reaction alpha-ribazole 5'-phosphate + adenosylcob(III)inamide-GDP = adenosylcob(III)alamin 5'-phosphate + GMP + H(+). It functions in the pathway cofactor biosynthesis; adenosylcobalamin biosynthesis; adenosylcobalamin from cob(II)yrinate a,c-diamide: step 7/7. In terms of biological role, joins adenosylcobinamide-GDP and alpha-ribazole to generate adenosylcobalamin (Ado-cobalamin). Also synthesizes adenosylcobalamin 5'-phosphate from adenosylcobinamide-GDP and alpha-ribazole 5'-phosphate. This is Adenosylcobinamide-GDP ribazoletransferase from Geotalea daltonii (strain DSM 22248 / JCM 15807 / FRC-32) (Geobacter daltonii).